A 189-amino-acid chain; its full sequence is Large ribosomal subunit protein bL9 (189 aa).

The protein belongs to the bacterial ribosomal protein bL9 family.

Functionally, binds to the 23S rRNA. This chain is Large ribosomal subunit protein bL9, found in Brucella ovis (strain ATCC 25840 / 63/290 / NCTC 10512).